The chain runs to 310 residues: Ribosomal protein uL3 glutamine methyltransferase (310 aa).

It belongs to the protein N5-glutamine methyltransferase family. PrmB subfamily.

It carries out the reaction L-glutaminyl-[ribosomal protein uL3] + S-adenosyl-L-methionine = N(5)-methyl-L-glutaminyl-[ribosomal protein uL3] + S-adenosyl-L-homocysteine + H(+). Methylates large ribosomal subunit protein uL3 on a specific glutamine residue. In Yersinia pestis, this protein is Ribosomal protein uL3 glutamine methyltransferase.